We begin with the raw amino-acid sequence, 137 residues long: Transcription antitermination protein NusB (137 aa).

Belongs to the NusB family.

Its function is as follows. Involved in transcription antitermination. Required for transcription of ribosomal RNA (rRNA) genes. Binds specifically to the boxA antiterminator sequence of the ribosomal RNA (rrn) operons. The chain is Transcription antitermination protein NusB from Aeromonas salmonicida (strain A449).